Consider the following 394-residue polypeptide: RHOMBOID-like protein 4 (394 aa).

A disordered region spans residues 1-51 (MGEKDSETAPIWGKTRERERSNNNNIQPMDLESSSSVSGQQRSLTQSRSSY). Polar residues predominate over residues 39–49 (GQQRSLTQSRS). Helical transmembrane passes span 64–84 (WFPWLIPCFVVANVAVFVITM), 147–167 (WLHGGVVHLLMNMLTLLFIGI), 175–195 (FIRIGLLYLISGFGGSILSAL), 201–221 (ISVGASGAVFGLLGGMLSEIF), 231–251 (VVTIVTLVLIVAVNLGLGVLP), 254–274 (DNFAHIGGFATGFLLGFVLLI), and 300–320 (ILWTISLLILVAGFIVGLISL). Residue Ser206 is the Nucleophile of the active site. Catalysis depends on His258, which acts as the Charge relay system.

This sequence belongs to the peptidase S54 family.

It is found in the membrane. The enzyme catalyses Cleaves type-1 transmembrane domains using a catalytic dyad composed of serine and histidine that are contributed by different transmembrane domains.. Probable rhomboid-type serine protease that catalyzes intramembrane proteolysis. This chain is RHOMBOID-like protein 4, found in Arabidopsis thaliana (Mouse-ear cress).